The following is a 133-amino-acid chain: ATP synthase epsilon chain (133 aa).

Belongs to the ATPase epsilon chain family. F-type ATPases have 2 components, CF(1) - the catalytic core - and CF(0) - the membrane proton channel. CF(1) has five subunits: alpha(3), beta(3), gamma(1), delta(1), epsilon(1). CF(0) has three main subunits: a, b and c.

The protein resides in the cellular thylakoid membrane. Its function is as follows. Produces ATP from ADP in the presence of a proton gradient across the membrane. The polypeptide is ATP synthase epsilon chain (Prochlorococcus marinus (strain MIT 9303)).